We begin with the raw amino-acid sequence, 196 residues long: NADH-quinone oxidoreductase subunit I (196 aa).

4Fe-4S ferredoxin-type domains are found at residues 54-84 (LNRW…VEGA) and 104-133 (RVYQ…MTNE). Positions 64, 67, 70, 74, 113, 116, 119, and 123 each coordinate [4Fe-4S] cluster.

It belongs to the complex I 23 kDa subunit family. As to quaternary structure, NDH-1 is composed of 14 different subunits. Subunits NuoA, H, J, K, L, M, N constitute the membrane sector of the complex. It depends on [4Fe-4S] cluster as a cofactor.

The protein localises to the cell membrane. The catalysed reaction is a quinone + NADH + 5 H(+)(in) = a quinol + NAD(+) + 4 H(+)(out). In terms of biological role, NDH-1 shuttles electrons from NADH, via FMN and iron-sulfur (Fe-S) centers, to quinones in the respiratory chain. The immediate electron acceptor for the enzyme in this species is believed to be ubiquinone. Couples the redox reaction to proton translocation (for every two electrons transferred, four hydrogen ions are translocated across the cytoplasmic membrane), and thus conserves the redox energy in a proton gradient. The polypeptide is NADH-quinone oxidoreductase subunit I (Nocardioides sp. (strain ATCC BAA-499 / JS614)).